We begin with the raw amino-acid sequence, 418 residues long: BTB and MATH domain-containing protein 41 (418 aa).

The disordered stretch occupies residues 1-33; it reads MEINNGAQPENAAVSIPSRSPSGKSEKRKSPSI. The region spanning 45-173 is the MATH domain; the sequence is SFTNYWSVER…NDILTIGCEL (129 aa). Positions 232–293 constitute a BTB domain; sequence SDFIIVASCG…TLDVLLRHMY (62 aa).

Interacts with cul-3.

Its pathway is protein modification; protein ubiquitination. Functionally, probable substrate-specific adapter of an E3 ubiquitin-protein ligase complex which mediates the ubiquitination and subsequent proteasomal degradation of target proteins. The polypeptide is BTB and MATH domain-containing protein 41 (bath-41) (Caenorhabditis elegans).